The sequence spans 272 residues: Urease accessory protein UreD (272 aa).

Belongs to the UreD family. UreD, UreF and UreG form a complex that acts as a GTP-hydrolysis-dependent molecular chaperone, activating the urease apoprotein by helping to assemble the nickel containing metallocenter of UreC. The UreE protein probably delivers the nickel.

It localises to the cytoplasm. Functionally, required for maturation of urease via the functional incorporation of the urease nickel metallocenter. This chain is Urease accessory protein UreD, found in Opitutus terrae (strain DSM 11246 / JCM 15787 / PB90-1).